Consider the following 634-residue polypeptide: Chaperone protein HtpG (634 aa).

An a; substrate-binding region spans residues 1–342; sequence MSVETQKETL…SNDLSLNVSR (342 aa). Positions 343 to 559 are b; that stretch reads EILQKDPIID…EQDLGLQMRQ (217 aa). The interval 560–634 is c; that stretch reads ILEASGQKVP…LNKLLVELSV (75 aa).

The protein belongs to the heat shock protein 90 family. Homodimer.

The protein localises to the cytoplasm. Functionally, molecular chaperone. Has ATPase activity. The polypeptide is Chaperone protein HtpG (Pseudomonas fluorescens (strain ATCC BAA-477 / NRRL B-23932 / Pf-5)).